The primary structure comprises 423 residues: Sporulation-regulated protein 28 (423 aa).

In terms of domain architecture, Septin-type G spans 28–342; the sequence is KGLQLSILLL…ENYRAKVLTE (315 aa). Positions 38–45 are G1 motif; sequence GEKGSGKS. Residues 38-45, Gly124, 204-212, and Arg291 each bind GTP; these read GEKGSGKS and KADGLTETE. The interval 121-124 is G3 motif; sequence LFPG. The interval 203 to 206 is G4 motif; sequence PKAD. The span at 360–381 shows a compositional bias: polar residues; that stretch reads RGSVSNVSTRRNSASRTLGNPD. The disordered stretch occupies residues 360–385; sequence RGSVSNVSTRRNSASRTLGNPDTNDE. The stretch at 384-417 forms a coiled coil; the sequence is DENAYQIHKEIDEKNRIIEDYQRKIDLLEKMLAA.

It belongs to the TRAFAC class TrmE-Era-EngA-EngB-Septin-like GTPase superfamily. Septin GTPase family. In terms of assembly, interacts with itself. Interacts with CDC11 and SPR3; probably to form a ring at the bud neck.

It is found in the membrane. The protein resides in the bud neck. Septins are GTPases involved in cytokinesis that assemble into filaments and form a ring at the cleavage site. May act by recruiting MYO1 and HOF1, a protein involved in septation, to the site of cleavage. Septins are also involved in cell morphogenesis, bud site selection, chitin deposition, cell cycle regulation, cell compartmentalization and spore wall formation. In Saccharomyces cerevisiae (strain ATCC 204508 / S288c) (Baker's yeast), this protein is Sporulation-regulated protein 28 (SPR28).